A 462-amino-acid chain; its full sequence is ATP synthase subunit beta (462 aa).

An ATP-binding site is contributed by 152 to 159; the sequence is GGAGVGKT.

Belongs to the ATPase alpha/beta chains family. In terms of assembly, F-type ATPases have 2 components, CF(1) - the catalytic core - and CF(0) - the membrane proton channel. CF(1) has five subunits: alpha(3), beta(3), gamma(1), delta(1), epsilon(1). CF(0) has three main subunits: a(1), b(2) and c(9-12). The alpha and beta chains form an alternating ring which encloses part of the gamma chain. CF(1) is attached to CF(0) by a central stalk formed by the gamma and epsilon chains, while a peripheral stalk is formed by the delta and b chains.

It is found in the cell inner membrane. The catalysed reaction is ATP + H2O + 4 H(+)(in) = ADP + phosphate + 5 H(+)(out). Its function is as follows. Produces ATP from ADP in the presence of a proton gradient across the membrane. The catalytic sites are hosted primarily by the beta subunits. This Shewanella amazonensis (strain ATCC BAA-1098 / SB2B) protein is ATP synthase subunit beta.